Consider the following 800-residue polypeptide: General transcription and DNA repair factor IIH helicase/translocase subunit XPB (800 aa).

The tract at residues 1-27 (MSSGDSNLKRRRGGNTGQSSKSYNTWT) is disordered. Polar residues predominate over residues 17–27 (GQSSKSYNTWT). The Helicase ATP-binding domain occupies 329-491 (MFGNGRARSG…DLNFLIGPKL (163 aa)). 342-349 (LPCGAGKS) contacts ATP. The short motif at 444 to 447 (DEVH) is the DEVH box element. A Helicase C-terminal domain is found at 546 to 704 (RACEYLIRFH…ELPGIDQEVN (159 aa)). The segment at 743–769 (GAKKSKSSAPTVSRTTGGSTRALSGGN) is disordered. Positions 749-764 (SSAPTVSRTTGGSTRA) are enriched in polar residues.

It belongs to the helicase family. RAD25/XPB subfamily. As to quaternary structure, component of the 7-subunit TFIIH core complex composed of XPB/repB, XPD/repD, gtf2h1, gtf2h2, gtf2h3, gtf2h4 and gtf2h5, which is active in NER. The core complex associates with the 3-subunit CDK-activating kinase (CAK) module composed of cycH/cyclin H, cdk7 and mnat1 to form the 10-subunit holoenzyme (holo-TFIIH) active in transcription.

It is found in the nucleus. It catalyses the reaction Couples ATP hydrolysis with the unwinding of duplex DNA by translocating in the 3'-5' direction.. It carries out the reaction ATP + H2O = ADP + phosphate + H(+). ATP-dependent 3'-5' DNA helicase/translocase; binds dsDNA rather than ssDNA, unzipping it in a translocase rather than classical helicase activity. Component of the general transcription and DNA repair factor IIH (TFIIH) core complex. When complexed to CDK-activating kinase (CAK), involved in RNA transcription by RNA polymerase II. The ATPase activity of XPB/ERCC3, but not its helicase activity, is required for DNA opening; it may wrap around the damaged DNA wedging it open, causing localized melting and twisting that allows XPD/ERCC2 helicase to anchor. The ATP-dependent helicase activity of XPB/ERCC3 may be required for promoter escape. Also involved in transcription-coupled nucleotide excision repair (NER) of damaged DNA. In NER, TFIIH acts by opening DNA around the lesion to allow the excision of the damaged oligonucleotide and its replacement by a new DNA fragment. The structure of the TFIIH transcription complex differs from the NER-TFIIH complex. In Dictyostelium discoideum (Social amoeba), this protein is General transcription and DNA repair factor IIH helicase/translocase subunit XPB.